A 459-amino-acid chain; its full sequence is MPPTISDDTTVRSFTCAQPLGRAGYELIIRQMLHRFLSDLHTTKALLDRSLQATVNHAAGPVRSLLTIITVGFYTLLNWCSLGSYHTTKMISTVVTGLLLLASGCEALPTNQTPLPGKWSTLPNITLNGVEYPRQEHAAALVGDEIFVLGGILPWDGKEYATTNIVQKYNMITGTWTETAPMPAALNHANVAVVDGKIYYLGGLEAVDETYWNATGKSAVYDPATDEWTVLPSMPEGREIGSAATVVVDDTIYLPGGLAYTNITYDQEGTVSRFSSYNVRTQEWTTLPDLPAPRDHAGKGIYRDMLYILGGREFGNKNVVSTVFGFNLTSQQWATAFEPMPIARGGVASATIGSLIFTAGGEGDRRTPTAVFPEMQAYDAATNTWVDYADMPLPVHGSDAVVYKGEIVIPGGGIVTGATLTPVVQTFQPPLPDSGEKSMPLMVMVYRVVFDLPWMLFKR.

6 Kelch repeats span residues 92–144 (STVV…LVGD), 145–196 (EIFV…VVDG), 198–248 (IYYL…TVVV), 251–304 (TIYL…IYRD), 306–354 (LYIL…TIGS), and 355–405 (LIFT…VYKG).

The protein operates within secondary metabolite biosynthesis. Kelch-like protein; part of the gene cluster that mediates the biosynthesis of terrein, a fungal metabolite with ecological, antimicrobial, antiproliferative, and antioxidative activities. The first step in the pathway is performed by the polyketide synthase terA that produces 4-hydroxy-6-methylpyranon (4-HMP), orsellinic acid (OA), and 2,3-dehydro-6-hydroxymellein (2,3-dehydro-6-HM) by condensing acetyl-CoA with two, three, or four malonyl-CoA units, respectively. 4-HMP and OA are not pathway intermediates, but are rather shunt or side products. 2,3-dehydro-6-HM is further converted to 6-hydroxymellein (6-HM) by the 6-hydroxymellein synthase terB. The monooxygenases terC and terD, the multicopper oxidase terE and the Kelch-like protein terF are then involved in the transformation of 6-HM to terrein. Even if they are co-regulated with the other terrein cluster genes, terH and terI seem to be dispensable for terrein production; whereas one or both of the 2 transporters terG and terJ are probably required for efficient secretion of metabolites. The polypeptide is Kelch-like protein terF (Aspergillus terreus (strain NIH 2624 / FGSC A1156)).